The sequence spans 460 residues: Ankyrin repeat and MYND domain-containing protein 2 (460 aa).

ANK repeat units lie at residues 45–74, 79–108, and 159–188; these read HGMT…DVNC, HGYT…ETDV, and KLAG…NPLL. Zn(2+) contacts are provided by Cys320, Cys323, Cys332, Cys335, Cys341, Cys345, His353, and Cys357. The segment at 320 to 357 adopts an MYND-type zinc-finger fold; it reads CTTCGEKGADKRCSVCKVVMYCDQNCQKTHWFTHKKVC. 2 stretches are compositionally biased toward basic and acidic residues: residues 371-387 and 425-436; these read AAKE…KDEA and ELTKEPEARAPR. The segment at 371 to 460 is disordered; sequence AAKEKRRQEK…ALQKIQDSEE (90 aa).

The protein localises to the cell projection. Its subcellular location is the cilium. Its function is as follows. May be involved in the trafficking of signaling proteins to the cilia. The protein is Ankyrin repeat and MYND domain-containing protein 2 (ANKMY2) of Gallus gallus (Chicken).